Here is a 317-residue protein sequence, read N- to C-terminus: Bile salt hydrolase/transferase (317 aa).

Cysteine 2 (nucleophile; acyl-thioester intermediate) is an active-site residue. 2 residues coordinate deoxycholate: cysteine 2 and arginine 18. Taurine is bound at residue asparagine 82.

This sequence belongs to the peptidase C59 family. In terms of assembly, homotetramer. The tetramer consists of a dimer of dimers.

The catalysed reaction is glycocholate + H2O = cholate + glycine. The enzyme catalyses glycodeoxycholate + H2O = deoxycholate + glycine. It carries out the reaction chenodeoxycholate + glycine = glycochenodeoxycholate + H2O. It catalyses the reaction cholate + taurine = taurocholate + H2O. The catalysed reaction is taurodeoxycholate + H2O = deoxycholate + taurine. The enzyme catalyses taurochenodeoxycholate + H2O = chenodeoxycholate + taurine. It carries out the reaction an L-alpha-amino acid + cholate = an N-choloyl-L-alpha-amino acid + H2O. It catalyses the reaction an L-alpha-amino acid + taurocholate = an N-choloyl-L-alpha-amino acid + taurine. The catalysed reaction is cholate + L-alanine = L-alanocholate + H2O. The enzyme catalyses taurocholate + L-alanine = L-alanocholate + taurine. It carries out the reaction cholate + L-serine = L-serocholate + H2O. It catalyses the reaction taurocholate + L-serine = L-serocholate + taurine. The catalysed reaction is cholate + L-histidine = L-histidocholate + H2O. The enzyme catalyses taurocholate + L-histidine = L-histidocholate + taurine. It participates in lipid metabolism; bile acid biosynthesis. Its activity is regulated as follows. Hydrolase activity is competitively inhibited by the products cholate (CA) and deoxycholate (DCA), and by phenylacetate and 4-aminophenylacetate. Penicillin V and penicillin G show mixed inhibition. Strongly inhibited by thiol enzyme inhibitors in vitro. In terms of biological role, possesses dual functions in bile acid metabolism. Acts as a bile salt hydrolase that catalyzes the deconjugation of glycine- and taurine-linked bile salts, which occurs naturally in the intestines of humans, releasing amino acid residues and deconjugated bile salts (bile acids). Can hydrolyze the amide bond in all six major human conjugated bile salts, namely glycocholate (GCA), glycodeoxycholate (GDCA), glycochenodeoxycholate (GCDCA), taurocholate (TCA), taurodeoxycholate (TDCA) and taurochenodeoxycholate (TCDCA). Shows a slight preference for glycine-conjugated bile acids as substrates. Also acts as an amine N-acyltransferase that conjugates a wide variety of amino acids to conjugated and non-conjugated bile acids, thus producing bacterial bile acid amidates (BBAAs) - also named microbially conjugated bile acids (MCBAs) - in the gastrointestinal tract. These BBAAs may facilitate communication between the microbiota and host through the activation of human ligand-activated transcription factors. Is totally inactive toward penicillin V. The protein is Bile salt hydrolase/transferase of Bifidobacterium longum.